The sequence spans 276 residues: Bis(5'-nucleosyl)-tetraphosphatase, symmetrical (276 aa).

It belongs to the Ap4A hydrolase family.

The catalysed reaction is P(1),P(4)-bis(5'-adenosyl) tetraphosphate + H2O = 2 ADP + 2 H(+). Functionally, hydrolyzes diadenosine 5',5'''-P1,P4-tetraphosphate to yield ADP. This chain is Bis(5'-nucleosyl)-tetraphosphatase, symmetrical, found in Legionella pneumophila (strain Corby).